Reading from the N-terminus, the 638-residue chain is MSDKDSKNTPQVPEKLGLSRRGFLGASAVTGAAVAATALGGAVMTRESWAQAVKESKQKIHVGPGELDDYYGFWSGGHQGEVRVLGVPSMRELMRIPVFNVDSATGWGLTNESRHIMGDSAKFLNGDCHHPHISMTDGKYDGKYLFINDKANSRVARIRLDIMKCDKMITVPNVQAIHGLRLQKVPHTKYVFANAEFIIPHPNDGKVFDLQDENSYTMYNAIDAETMEMAFQVIVDGNLDNTDADYTGRFAAATCYNSEKAFDLGGMMRNERDWVVVFDIHAVEAAVKAGDFITLGDSKTPVLDGRKKDGKDSKFTRYVPVPKNPHGCNTSSDGKYFIAAGKLSPTCSMIAIDKLPDLFAGKLADPRDVIVGEPELGLGPLHTTFDGRGNAYTTLFIDSQVVKWNMEEAVRAYKGEKVNYIKQKLDVHYQPGHLHASLCETNEADGKWLVALSKFSKDRFLPVGPLHPENDQLIDISGDEMKLVHDGPTFAEPHDCIMARRDQIKTKKIWDRNDPFFAPTVEMAKKDGINLDTDNKVIRDGNKVRVYMTSMAPAFGVQEFTVKQGDEVTVTITNIDQIEDVSHGFVVVNHGVSMEISPQQTSSITFVADKPGLHWYYCSWFCHALHMEMVGRMMVEPA.

Residues 1 to 52 constitute a signal peptide (tat-type signal); it reads MSDKDSKNTPQVPEKLGLSRRGFLGASAVTGAAVAATALGGAVMTRESWAQA. Cu cation-binding residues include His129, His130, and His178. The Ca(2+) site is built by Tyr256, Glu259, Met267, Asp273, and Asn324. Residues His326, His382, and His433 each coordinate Cu cation. Ca(2+) contacts are provided by Lys454 and Glu469. Cu cation-binding residues include His494, His583, Cys618, Trp620, Cys622, His626, and Met629. Positions 542 to 638 are COX2-like; sequence NKVRVYMTSM…MVGRMMVEPA (97 aa).

This sequence belongs to the NosZ family. In the C-terminal section; belongs to the cytochrome c oxidase subunit 2 family. In terms of assembly, homodimer. Ca(2+) serves as cofactor. It depends on Cu cation as a cofactor. Post-translationally, predicted to be exported by the Tat system. The position of the signal peptide cleavage has not been experimentally proven. The N-terminus is blocked.

It localises to the periplasm. The enzyme catalyses N2 + 2 Fe(III)-[cytochrome c] + H2O = nitrous oxide + 2 Fe(II)-[cytochrome c] + 2 H(+). Its pathway is nitrogen metabolism; nitrate reduction (denitrification); dinitrogen from nitrate: step 4/4. In terms of biological role, nitrous-oxide reductase is part of a bacterial respiratory system which is activated under anaerobic conditions in the presence of nitrate or nitrous oxide. This chain is Nitrous-oxide reductase (nosZ), found in Stutzerimonas stutzeri (Pseudomonas stutzeri).